The chain runs to 61 residues: Small ribosomal subunit protein uS14 (61 aa).

Cysteine 24, cysteine 27, cysteine 40, and cysteine 43 together coordinate Zn(2+).

Belongs to the universal ribosomal protein uS14 family. Zinc-binding uS14 subfamily. Part of the 30S ribosomal subunit. Contacts proteins S3 and S10. Zn(2+) is required as a cofactor.

Its function is as follows. Binds 16S rRNA, required for the assembly of 30S particles and may also be responsible for determining the conformation of the 16S rRNA at the A site. This chain is Small ribosomal subunit protein uS14, found in Treponema pallidum (strain Nichols).